Reading from the N-terminus, the 361-residue chain is Very-long-chain 3-oxoacyl-CoA reductase (361 aa).

Residues 32-52 (PALILSTVGAAFLLRYTLSIF) traverse the membrane as a helical segment. Positions 79, 133, 163, 198, 236, 240, 269, and 271 each coordinate NADP(+). Y236 (proton donor) is an active-site residue. K240 (lowers pKa of active site Tyr) is an active-site residue.

Belongs to the short-chain dehydrogenases/reductases (SDR) family.

It localises to the endoplasmic reticulum membrane. The enzyme catalyses a very-long-chain (3R)-3-hydroxyacyl-CoA + NADP(+) = a very-long-chain 3-oxoacyl-CoA + NADPH + H(+). It functions in the pathway lipid metabolism; fatty acid biosynthesis. In terms of biological role, component of the microsomal membrane bound fatty acid elongation system, which produces the 26-carbon very long-chain fatty acids (VLCFA) from palmitate. Catalyzes the reduction of the 3-ketoacyl-CoA intermediate that is formed in each cycle of fatty acid elongation. VLCFAs serve as precursors for ceramide and sphingolipids. This Cryptococcus neoformans var. neoformans serotype D (strain B-3501A) (Filobasidiella neoformans) protein is Very-long-chain 3-oxoacyl-CoA reductase.